The following is a 413-amino-acid chain: BEN domain-containing protein 7 (413 aa).

Glycyl lysine isopeptide (Lys-Gly) (interchain with G-Cter in SUMO2) cross-links involve residues Lys16, Lys56, and Lys85. Over residues 78–88 the composition is skewed to basic and acidic residues; that stretch reads GKEGEKLKEEP. Disordered stretches follow at residues 78 to 153 and 208 to 243; these read GKEG…GELP and RTAV…MEKK. 2 stretches are compositionally biased toward polar residues: residues 99-111 and 121-153; these read LNSS…SLHP and PPQS…GELP. Positions 211 to 222 are enriched in basic residues; the sequence is VSRKRNKKKKVP. Residues 223-232 are compositionally biased toward low complexity; the sequence is PKTVEPLTVK. Residue Lys243 forms a Glycyl lysine isopeptide (Lys-Gly) (interchain with G-Cter in SUMO2) linkage. The region spanning 287-392 is the BEN domain; sequence GFDVFMPKSQ…IKLARRRLKR (106 aa). Thr324 is modified (phosphothreonine). Ser328 is modified (phosphoserine).

The chain is BEN domain-containing protein 7 (BEND7) from Homo sapiens (Human).